Reading from the N-terminus, the 1059-residue chain is Microtubule-associated protein 1S (1059 aa).

A necessary for the microtubule-organizing center localization region spans residues methionine 1 to serine 797. A phosphoserine mark is found at serine 321 and serine 472. Disordered regions lie at residues proline 461–histidine 733 and valine 751–proline 942. Basic and acidic residues-rich tracts occupy residues glycine 466–glycine 486 and proline 494–lysine 530. Residues serine 547–glutamine 557 are compositionally biased toward polar residues. Serine 582 bears the Phosphoserine mark. Over residues alanine 591 to serine 603 the composition is skewed to low complexity. Threonine 638 carries the phosphothreonine modification. Phosphoserine is present on serine 640. Residues glutamate 642–glutamate 652 show a composition bias toward basic and acidic residues. Phosphoserine is present on residues serine 655 and serine 657. The interval proline 666–phenylalanine 1059 is necessary for interaction with RASSF1 isoform A and isoform C. Over residues proline 670–proline 680 the composition is skewed to low complexity. A necessary for association with microtubules region spans residues glutamate 714–glutamate 966. Phosphoserine occurs at positions 731 and 759. Positions serine 759–arginine 769 are enriched in low complexity. A compositionally biased stretch (polar residues) spans proline 783–aspartate 796. Serine 809 carries the phosphoserine modification. Residues proline 825 to aspartate 836 show a composition bias toward pro residues. Low complexity-rich tracts occupy residues alanine 873–lysine 887 and threonine 923–proline 936. The segment at alanine 960–phenylalanine 1059 is necessary for association with actin. Residues phenylalanine 967–alanine 991 are necessary for the mitochondrial aggregation and genome destruction.

This sequence belongs to the MAP1 family. Heterodimer of a heavy and a light chain. Interacts with microtubules and actin. Both MAP1S heavy and light chains interact with microtubules. MAP1S light chain interacts with actin. Interacts (via C-terminus) with GAN (via Kelch domains). Interacts with ESR1, LRPPRC, RASSF1 isoform A and isoform C, microtubules and VCY2. Interacts with WDR47 (via N-terminus of light chain). Expressed in neurons (at protein level). Expressed in spermatocytes, spermatids and spermatozoa. Expressed in the cerebral cortex. Highly expressed in testis. Moderately expressed in the brain, colon, heart, kidney, liver, lung, placenta, small intestine, spleen and stomach. Weakly expressed in muscle.

Its subcellular location is the nucleus. The protein resides in the cytoplasm. It is found in the cytosol. The protein localises to the cytoskeleton. It localises to the spindle. Its function is as follows. Microtubule-associated protein that mediates aggregation of mitochondria resulting in cell death and genomic destruction (MAGD). Plays a role in anchoring the microtubule organizing center to the centrosomes. Binds to DNA. Plays a role in apoptosis. Involved in the formation of microtubule bundles. The polypeptide is Microtubule-associated protein 1S (MAP1S) (Homo sapiens (Human)).